Reading from the N-terminus, the 172-residue chain is Small ribosomal subunit protein uS5 (172 aa).

The 64-residue stretch at 17–80 (LREKMISVNR…DEARRKMVKV (64 aa)) folds into the S5 DRBM domain.

It belongs to the universal ribosomal protein uS5 family. Part of the 30S ribosomal subunit. Contacts proteins S4 and S8.

Its function is as follows. With S4 and S12 plays an important role in translational accuracy. Located at the back of the 30S subunit body where it stabilizes the conformation of the head with respect to the body. In Cupriavidus pinatubonensis (strain JMP 134 / LMG 1197) (Cupriavidus necator (strain JMP 134)), this protein is Small ribosomal subunit protein uS5.